The sequence spans 67 residues: Large ribosomal subunit protein bL32 (67 aa).

Residues 1–19 are compositionally biased toward basic residues; it reads MAVPKRKMSRSNTRARRSQ. Residues 1-21 are disordered; that stretch reads MAVPKRKMSRSNTRARRSQWK.

Belongs to the bacterial ribosomal protein bL32 family.

The sequence is that of Large ribosomal subunit protein bL32 from Arthrobacter sp. (strain FB24).